We begin with the raw amino-acid sequence, 233 residues long: LOB domain-containing protein 40 (233 aa).

The 107-residue stretch at 3-109 (MSCNGCRVLR…VEAVMRGSPV (107 aa)) folds into the LOB domain. Positions 143 to 160 (KRRSRGACKEERNVRSLS) are enriched in basic and acidic residues. The interval 143 to 183 (KRRSRGACKEERNVRSLSHESSLSHESPVSSEETTTEEPKT) is disordered. The span at 161 to 175 (HESSLSHESPVSSEE) shows a compositional bias: low complexity.

It belongs to the LOB domain-containing protein family. Expressed in roots and flowers.

This Arabidopsis thaliana (Mouse-ear cress) protein is LOB domain-containing protein 40 (LBD40).